We begin with the raw amino-acid sequence, 1424 residues long: Putative disease resistance protein At3g14460 (1424 aa).

Residues 152–454 enclose the NB-ARC domain; sequence WRQASRSRPD…AIDLLYQPRS (303 aa). ATP is bound at residue 200 to 207; sequence GMPGVGKT. 7 LRR repeats span residues 498–523, 552–571, 572–595, 597–618, 620–641, 642–665, and 806–830; these read VSGDFCFRLEDDNIPEIPSTTRHFSF, PTSLESLQLTEKVLNPLLNA, LSGLRILSLSHYQITNLPKSLKGL, LLRYLDLSSTKIKELPEFVCTL, NLQTLLLSNCRDLTSLPKSIAE, LINLRLLDLVGTPLVEMPPGIKKL, and LPSLKYLSIEKFNILQKVGLDFFFG. Disordered stretches follow at residues 911-977 and 1050-1070; these read FRRS…PKDR and IKSSVPSPRSSEAIKPSQYDD. Composition is skewed to polar residues over residues 912–927 and 934–972; these read RRSLTNIPESPASIPS and SSPTGNPKSDASTSAQPGFASSSQSNDDNEVTSTSSLSS. LRR repeat units lie at residues 1090-1114, 1118-1139, 1238-1262, 1264-1286, and 1310-1336; these read PQNLQSLHIDSCDGLTSLPENLTES, LHELLIIACHSLESFPGSHPPT, TPKLSSMLLSNCKKLQALPEKLFGL, SLLSLFIIKCPEIETIPGGGFPS, and LENLRNLEIDGGNEDIESFPEEGLLPK.

Belongs to the disease resistance NB-LRR family.

Potential disease resistance protein. In Arabidopsis thaliana (Mouse-ear cress), this protein is Putative disease resistance protein At3g14460.